A 120-amino-acid polypeptide reads, in one-letter code: uncharacterized protein (120 aa).

The protein to the N-terminal region of phage HK97/HK620 Gp37/hpaH.

This is an uncharacterized protein from Escherichia coli (strain K12).